Reading from the N-terminus, the 840-residue chain is N-acetyltransferase ESCO1 (840 aa).

Residues 1–25 are compositionally biased toward basic and acidic residues; that stretch reads MMSIQEKSKENSSKVTKKSDDKNSE. Residues 1–188 form a disordered region; the sequence is MMSIQEKSKE…VLEVKSDSKE (188 aa). Polar residues-rich tracts occupy residues 46–58, 65–74, and 81–96; these read KSQA…SKIN, RMSTRSSKAA, and KSIN…YSQE. Positions 131–140 are enriched in basic and acidic residues; it reads VSRRSLRSRE. The segment covering 141–153 has biased composition (polar residues); the sequence is IQGQVQAVKQSLP. The segment covering 161–170 has biased composition (low complexity); the sequence is SSTQSKSNKT. Over residues 178-188 the composition is skewed to basic and acidic residues; sequence KVLEVKSDSKE. The residue at position 200 (Ser200) is a Phosphoserine. Disordered stretches follow at residues 221 to 300 and 318 to 338; these read TQGS…KSKR and NVEV…KPTE. Over residues 267 to 278 the composition is skewed to polar residues; it reads HTQVNTNTTLPK. Over residues 319–338 the composition is skewed to basic and acidic residues; that stretch reads VEVKKESSQMESVKEEKPTE. Lys332 is covalently cross-linked (Glycyl lysine isopeptide (Lys-Gly) (interchain with G-Cter in SUMO2)). A Phosphoserine modification is found at Ser412. 2 disordered regions span residues 486-505 and 542-582; these read ANEI…HSFD and TGEN…KCNS. A compositionally biased stretch (polar residues) spans 551 to 565; that stretch reads APQQHSILSNQTSKS. A CCHH-type zinc finger spans residues 617 to 641; sequence VSCNVCGMLYTASNPEDETQHLLFH. Acetyl-CoA is bound by residues 772–774, 780–785, and 812–814; these read IWV, RKKIAS, and TPD.

This sequence belongs to the acetyltransferase family. ECO subfamily. As to quaternary structure, the subunit structure is controversial. Monomer. Homodimer. In terms of processing, phosphorylated during mitosis, when associated with chromosomes. Widely expressed. Expressed in heart, brain, liver, placenta, lung, kidney and pancreas. Highly expressed in muscle.

The protein localises to the nucleus. It is found in the chromosome. It catalyses the reaction L-lysyl-[protein] + acetyl-CoA = N(6)-acetyl-L-lysyl-[protein] + CoA + H(+). Its function is as follows. Acetyltransferase required for the establishment of sister chromatid cohesion. Couples the processes of cohesion and DNA replication to ensure that only sister chromatids become paired together. In contrast to the structural cohesins, the deposition and establishment factors are required only during S phase. Acts by mediating the acetylation of cohesin component SMC3. The protein is N-acetyltransferase ESCO1 (ESCO1) of Homo sapiens (Human).